The sequence spans 116 residues: NADH-ubiquinone oxidoreductase chain 3 (116 aa).

The next 3 membrane-spanning stretches (helical) occupy residues 3-23, 56-76, and 87-107; these read LITT…TISF, FFLI…LLPL, and LTLI…IYEW.

The protein belongs to the complex I subunit 3 family.

The protein localises to the mitochondrion membrane. The enzyme catalyses a ubiquinone + NADH + 5 H(+)(in) = a ubiquinol + NAD(+) + 4 H(+)(out). Core subunit of the mitochondrial membrane respiratory chain NADH dehydrogenase (Complex I) that is believed to belong to the minimal assembly required for catalysis. Complex I functions in the transfer of electrons from NADH to the respiratory chain. The immediate electron acceptor for the enzyme is believed to be ubiquinone. This Oncorhynchus mykiss (Rainbow trout) protein is NADH-ubiquinone oxidoreductase chain 3 (MT-ND3).